The sequence spans 241 residues: Antimicrobial ginkbilobin-2-like protein (241 aa).

The N-terminal stretch at 1 to 23 is a signal peptide; sequence MLSSKYISVSFLLLSLSLHAVNC. 2 consecutive Gnk2-homologous domains span residues 25 to 127 and 133 to 238; these read DPLY…NIDF and NKNK…LYPF. Disulfide bonds link Cys81/Cys90, Cys93/Cys118, Cys192/Cys201, and Cys204/Cys229. An N-linked (GlcNAc...) asparagine glycan is attached at Asn89.

It belongs to the cysteine-rich repeat secretory protein family.

Its subcellular location is the secreted. Possesses antimicrobial activity toward the oomycete Phytophthora cinnamomi (ink disease agent), thus reducing its growth rate and confering an increased resistance to the plant. The sequence is that of Antimicrobial ginkbilobin-2-like protein from Castanea crenata (Japanese chestnut).